Reading from the N-terminus, the 353-residue chain is Photosystem II protein D1 (353 aa).

Thr-2 is subject to N-acetylthreonine. Thr-2 carries the post-translational modification Phosphothreonine. The next 3 membrane-spanning stretches (helical) occupy residues 29 to 46 (YIGWFGVLMIPTLLTATS), 118 to 133 (HFLLGVACYMGREWEL), and 142 to 156 (WIAVAYSAPVAAATA). His-118 provides a ligand contact to chlorophyll a. Tyr-126 lines the pheophytin a pocket. [CaMn4O5] cluster-binding residues include Asp-170 and Glu-189. A helical membrane pass occupies residues 197-218 (FHMLGVAGVFGGSLFSAMHGSL). His-198 lines the chlorophyll a pocket. Residues His-215 and 264–265 (SF) each bind a quinone. Fe cation is bound at residue His-215. Residue His-272 coordinates Fe cation. A helical membrane pass occupies residues 274–288 (FLAAWPVVGIWFTAL). Residues His-332, Glu-333, Asp-342, and Ala-344 each contribute to the [CaMn4O5] cluster site. The propeptide occupies 345–353 (ALEVPYLNG).

Belongs to the reaction center PufL/M/PsbA/D family. PSII is composed of 1 copy each of membrane proteins PsbA, PsbB, PsbC, PsbD, PsbE, PsbF, PsbH, PsbI, PsbJ, PsbK, PsbL, PsbM, PsbT, PsbX, PsbY, PsbZ, Psb30/Ycf12, at least 3 peripheral proteins of the oxygen-evolving complex and a large number of cofactors. It forms dimeric complexes. The D1/D2 heterodimer binds P680, chlorophylls that are the primary electron donor of PSII, and subsequent electron acceptors. It shares a non-heme iron and each subunit binds pheophytin, quinone, additional chlorophylls, carotenoids and lipids. D1 provides most of the ligands for the Mn4-Ca-O5 cluster of the oxygen-evolving complex (OEC). There is also a Cl(-1) ion associated with D1 and D2, which is required for oxygen evolution. The PSII complex binds additional chlorophylls, carotenoids and specific lipids. serves as cofactor. Phosphorylated in both bundle sheath and mesophyll cells, phosphorylation increases when cells are grown under high rather than low light regimes (70 vs 900 umol photons/m-2/s). In terms of processing, PSII is subject to light-induced damage, in particular to D1. Damaged protein is degraded by Deg1 and FtsH proteases and replaced. In maize mesophyll cells D1 degradation is less extensive in grana (stacked) vs stroma (unstacked) lamellae, in part due to exclusion of FtsH from the grana. D1 degradation is faster in bundle sheath cells. Post-translationally, tyr-161 forms a radical intermediate that is referred to as redox-active TyrZ, YZ or Y-Z. C-terminally processed by CTPA; processing is essential to allow assembly of the oxygen-evolving complex and thus photosynthetic growth.

It localises to the plastid. Its subcellular location is the chloroplast thylakoid membrane. The catalysed reaction is 2 a plastoquinone + 4 hnu + 2 H2O = 2 a plastoquinol + O2. Functionally, photosystem II (PSII) is a light-driven water:plastoquinone oxidoreductase that uses light energy to abstract electrons from H(2)O, generating O(2) and a proton gradient subsequently used for ATP formation. It consists of a core antenna complex that captures photons, and an electron transfer chain that converts photonic excitation into a charge separation. The D1/D2 (PsbA/PsbD) reaction center heterodimer binds P680, the primary electron donor of PSII as well as several subsequent electron acceptors. The chain is Photosystem II protein D1 from Zea mays (Maize).